The following is a 335-amino-acid chain: Dolichyl-diphosphooligosaccharide--protein glycosyltransferase subunit MAGT1 (335 aa).

An N-terminal signal peptide occupies residues 1-29; it reads MAAGWWFWCVSVTVAVALLIVCDVPSVSA. The Extracellular segment spans residues 30 to 184; that stretch reads QRKKEMVLSE…DVNIRVIRPP (155 aa). In terms of domain architecture, Thioredoxin spans 47-175; that stretch reads WTNKRPVIRM…IARWIADRTD (129 aa). N-linked (GlcNAc...) asparagine glycosylation is present at asparagine 71. Cysteine 87 and cysteine 90 are oxidised to a cystine. A helical transmembrane segment spans residues 185–205; that stretch reads NYAGPLMLGLLLAVIGGLVYL. Residues 206 to 209 are Cytoplasmic-facing; it reads RRSN. Residues 210–230 form a helical membrane-spanning segment; the sequence is MEFLFNKTGWAFAALCFVLAM. At 231-270 the chain is on the extracellular side; the sequence is TSGQMWNHIRGPPYAHKNPHTGHVNYIHGSSQAQFVAETH. Residues 271-291 traverse the membrane as a helical segment; sequence IVLLFNGGVTLGMVLLCEAAT. The Cytoplasmic portion of the chain corresponds to 292–300; the sequence is SDMDIGKRK. A helical transmembrane segment spans residues 301–321; sequence IMCVAGIGLVVLFFSWMLSIF. The Extracellular portion of the chain corresponds to 322 to 335; sequence RSKYHGYPYSFLMS.

The protein belongs to the OST3/OST6 family. Accessory component of the STT3B-containing form of the oligosaccharyltransferase (OST) complex. OST exists in two different complex forms which contain common core subunits RPN1, RPN2, OST48, OST4, DAD1 and TMEM258, either STT3A or STT3B as catalytic subunits, and form-specific accessory subunits. OST can form stable complexes with the Sec61 complex or with both the Sec61 and TRAP complexes. The association of TUSC3 or MAGT1 with the STT3B-containing complex seems to be mutually exclusvice.

The protein localises to the cell membrane. The protein resides in the endoplasmic reticulum. It localises to the endoplasmic reticulum membrane. It functions in the pathway protein modification; protein glycosylation. In terms of biological role, accessory component of the STT3B-containing form of the N-oligosaccharyl transferase (OST) complex which catalyzes the transfer of a high mannose oligosaccharide from a lipid-linked oligosaccharide donor to an asparagine residue within an Asn-X-Ser/Thr consensus motif in nascent polypeptide chains. Involved in N-glycosylation of STT3B-dependent substrates. Specifically required for the glycosylation of a subset of acceptor sites that are near cysteine residues; in this function seems to act redundantly with TUSC3. In its oxidized form proposed to form transient mixed disulfides with a glycoprotein substrate to facilitate access of STT3B to the unmodified acceptor site. Also has oxidoreductase-independent functions in the STT3B-containing OST complex possibly involving substrate recognition. Could indirectly play a role in Mg(2+) transport in epithelial cells. The protein is Dolichyl-diphosphooligosaccharide--protein glycosyltransferase subunit MAGT1 of Pongo abelii (Sumatran orangutan).